The chain runs to 145 residues: D-aminoacyl-tRNA deacylase (145 aa).

A Gly-cisPro motif, important for rejection of L-amino acids motif is present at residues 137-138; that stretch reads GP.

This sequence belongs to the DTD family. Homodimer.

It is found in the cytoplasm. The enzyme catalyses glycyl-tRNA(Ala) + H2O = tRNA(Ala) + glycine + H(+). It carries out the reaction a D-aminoacyl-tRNA + H2O = a tRNA + a D-alpha-amino acid + H(+). Functionally, an aminoacyl-tRNA editing enzyme that deacylates mischarged D-aminoacyl-tRNAs. Also deacylates mischarged glycyl-tRNA(Ala), protecting cells against glycine mischarging by AlaRS. Acts via tRNA-based rather than protein-based catalysis; rejects L-amino acids rather than detecting D-amino acids in the active site. By recycling D-aminoacyl-tRNA to D-amino acids and free tRNA molecules, this enzyme counteracts the toxicity associated with the formation of D-aminoacyl-tRNA entities in vivo and helps enforce protein L-homochirality. The polypeptide is D-aminoacyl-tRNA deacylase (Dichelobacter nodosus (strain VCS1703A)).